A 435-amino-acid chain; its full sequence is Probable exopolygalacturonase B (435 aa).

An N-terminal signal peptide occupies residues 1–15 (MKFFTAALFASAVSA). Asn59, Asn184, and Asn224 each carry an N-linked (GlcNAc...) asparagine glycan. Asp254 functions as the Proton donor in the catalytic mechanism. Cys256 and Cys273 are oxidised to a cystine. Residues Asn262 and Asn274 are each glycosylated (N-linked (GlcNAc...) asparagine). His277 is an active-site residue. N-linked (GlcNAc...) asparagine glycosylation is found at Asn301, Asn328, Asn365, and Asn368. Cys391 and Cys397 are joined by a disulfide.

This sequence belongs to the glycosyl hydrolase 28 family.

It is found in the secreted. The catalysed reaction is [(1-&gt;4)-alpha-D-galacturonosyl](n) + H2O = alpha-D-galacturonate + [(1-&gt;4)-alpha-D-galacturonosyl](n-1). Functionally, specific in hydrolyzing the terminal glycosidic bond of polygalacturonic acid and oligogalacturonates. The sequence is that of Probable exopolygalacturonase B (pgxB) from Aspergillus terreus (strain NIH 2624 / FGSC A1156).